A 1155-amino-acid chain; its full sequence is PAN2-PAN3 deadenylation complex catalytic subunit pan2 (1155 aa).

WD repeat units lie at residues 102–145 (THED…DKLP) and 276–315 (ANVS…HFNE). Residues 316–452 (MSKEVEFADV…GTKLNGEAED (137 aa)) form a linker region. The USP domain maps to 453-822 (DPLLKYSNVE…VPCVLAYQVK (370 aa)). The Exonuclease domain occupies 871–1049 (VALDTEFVDL…IEDARMALRL (179 aa)). A divalent metal cation contacts are provided by D874, E876, D983, and D1042. The tract at residues 1095-1155 (TAVTMQNNSG…GDFFGGSPLK (61 aa)) is disordered. Positions 1097-1106 (VTMQNNSGRN) are enriched in polar residues. Residues 1107–1124 (TPSTPEVTAPTASAPTTP) show a composition bias toward low complexity.

This sequence belongs to the peptidase C19 family. PAN2 subfamily. As to quaternary structure, forms a heterotrimer with an asymmetric homodimer of the regulatory subunit pan3 to form the poly(A)-nuclease (PAN) deadenylation complex. The cofactor is a divalent metal cation.

It localises to the cytoplasm. The enzyme catalyses Exonucleolytic cleavage of poly(A) to 5'-AMP.. With respect to regulation, positively regulated by the regulatory subunit pan3. Catalytic subunit of the poly(A)-nuclease (PAN) deadenylation complex, one of two cytoplasmic mRNA deadenylases involved in mRNA turnover. PAN specifically shortens poly(A) tails of RNA and the activity is stimulated by poly(A)-binding protein pab1. PAN deadenylation is followed by rapid degradation of the shortened mRNA tails by the CCR4-NOT complex. Deadenylated mRNAs are then degraded by two alternative mechanisms, namely exosome-mediated 3'-5' exonucleolytic degradation, or deadenylation-dependent mRNA decaping and subsequent 5'-3' exonucleolytic degradation by xrn1. May also be involved in post-transcriptional maturation of mRNA poly(A) tails. The protein is PAN2-PAN3 deadenylation complex catalytic subunit pan2 of Aspergillus oryzae (strain ATCC 42149 / RIB 40) (Yellow koji mold).